The chain runs to 414 residues: uncharacterized protein (414 aa).

3 disordered regions span residues 136-168 (SSKS…TVPT), 297-333 (PQNF…ENAS), and 346-414 (ALNA…NGSK). Residues 350-359 (PSRSRPTHGS) show a composition bias toward polar residues. Positions 399–414 (SKSEKIYPEPRRNGSK) are enriched in basic and acidic residues.

This is an uncharacterized protein from Homo sapiens (Human).